The primary structure comprises 57 residues: Large ribosomal subunit protein bL32 (57 aa).

The protein belongs to the bacterial ribosomal protein bL32 family.

This chain is Large ribosomal subunit protein bL32, found in Corynebacterium glutamicum (strain R).